A 206-amino-acid chain; its full sequence is LexA repressor (206 aa).

The segment at residues 28 to 48 (RAEIARRLGFKSANAAEEHLK) is a DNA-binding region (H-T-H motif). Active-site for autocatalytic cleavage activity residues include S123 and K160.

The protein belongs to the peptidase S24 family. Homodimer.

It carries out the reaction Hydrolysis of Ala-|-Gly bond in repressor LexA.. In terms of biological role, represses a number of genes involved in the response to DNA damage (SOS response), including recA and lexA. In the presence of single-stranded DNA, RecA interacts with LexA causing an autocatalytic cleavage which disrupts the DNA-binding part of LexA, leading to derepression of the SOS regulon and eventually DNA repair. The polypeptide is LexA repressor (Shewanella halifaxensis (strain HAW-EB4)).